Consider the following 130-residue polypeptide: Small ribosomal subunit protein uS8 (130 aa).

It belongs to the universal ribosomal protein uS8 family. As to quaternary structure, part of the 30S ribosomal subunit. Contacts proteins S5 and S12.

Its function is as follows. One of the primary rRNA binding proteins, it binds directly to 16S rRNA central domain where it helps coordinate assembly of the platform of the 30S subunit. In Pseudomonas syringae pv. tomato (strain ATCC BAA-871 / DC3000), this protein is Small ribosomal subunit protein uS8.